We begin with the raw amino-acid sequence, 675 residues long: DNA ligase (675 aa).

Residues 32–36, 81–82, and Glu-113 each bind NAD(+); these read DAEYD and SL. The active-site N6-AMP-lysine intermediate is Lys-115. Positions 136, 173, 291, and 315 each coordinate NAD(+). Cys-409, Cys-412, Cys-427, and Cys-433 together coordinate Zn(2+). The BRCT domain occupies 595–675; sequence SEKTYFFNKK…ELNSLIRIKE (81 aa).

The protein belongs to the NAD-dependent DNA ligase family. LigA subfamily. It depends on Mg(2+) as a cofactor. Requires Mn(2+) as cofactor.

It catalyses the reaction NAD(+) + (deoxyribonucleotide)n-3'-hydroxyl + 5'-phospho-(deoxyribonucleotide)m = (deoxyribonucleotide)n+m + AMP + beta-nicotinamide D-nucleotide.. Functionally, DNA ligase that catalyzes the formation of phosphodiester linkages between 5'-phosphoryl and 3'-hydroxyl groups in double-stranded DNA using NAD as a coenzyme and as the energy source for the reaction. It is essential for DNA replication and repair of damaged DNA. This Buchnera aphidicola subsp. Acyrthosiphon pisum (strain 5A) protein is DNA ligase.